The sequence spans 1147 residues: SR-related and CTD-associated factor 4 (1147 aa).

Positions 1–139 (MDAVNAFNQE…PLLDMAAGTS (139 aa)) constitute a CID domain. Lys-49 bears the N6-acetyllysine mark. Disordered regions lie at residues 145–179 (AENV…AVPQ), 235–254 (KTTP…PEQK), 269–331 (DEPE…QQPA), and 424–502 (VKRH…KPET). A Phosphoserine modification is found at Ser-154. 2 stretches are compositionally biased toward low complexity: residues 283-292 (TAVTTTAPAA) and 299-310 (TATVPAAAAPAA). Over residues 424-433 (VKRHMSDNRK) the composition is skewed to basic and acidic residues. Positions 434 to 475 (SRSRSASRSPKRRRSRSGSRSRRSRHRRSRSRSRDRRRHSPR) are enriched in basic residues. Positions 477–492 (RSQERRDREKERERRQ) are enriched in basic and acidic residues. The RRM domain occupies 508–582 (TTLWVGQLDK…KSIKIAWALN (75 aa)). 2 disordered regions span residues 629–661 (DWKG…IPKP) and 879–1147 (RPMP…EAPR). Ser-656 is modified (phosphoserine). A compositionally biased stretch (pro residues) spans 879–913 (RPMPPHMMHRGPPPGPGGFAMPPPHGMKGPFPPHG). A compositionally biased stretch (low complexity) spans 941–965 (QQPPQQPQQQPQPQAPQQPQQQQQQ). The span at 966–977 (QPPPSQQPPPTQ) shows a compositional bias: pro residues. Ser-1004 is subject to Phosphoserine. Basic and acidic residues predominate over residues 1009-1085 (VENDRERYGN…RGKEKPEVTD (77 aa)).

As to quaternary structure, interacts with POLR2A; via C-terminal heptapeptide repeat domain (CTD) phosphorylated at 'Ser-2' and 'Ser-5'.

It localises to the nucleus. In terms of biological role, anti-terminator protein required to prevent early mRNA termination during transcription. Together with SCAF8, acts by suppressing the use of early, alternative poly(A) sites, thereby preventing the accumulation of non-functional truncated proteins. Mechanistically, associates with the phosphorylated C-terminal heptapeptide repeat domain (CTD) of the largest RNA polymerase II subunit (POLR2A), and subsequently binds nascent RNA upstream of early polyadenylation sites to prevent premature mRNA transcript cleavage and polyadenylation. Independently of SCAF8, also acts as a suppressor of transcriptional readthrough. The sequence is that of SR-related and CTD-associated factor 4 from Homo sapiens (Human).